We begin with the raw amino-acid sequence, 248 residues long: Probable transcriptional regulatory protein Nham_3525 (248 aa).

The tract at residues 1–21 (MAGHSQFKNIMHRKGRQDAQK) is disordered.

Belongs to the TACO1 family.

The protein localises to the cytoplasm. The sequence is that of Probable transcriptional regulatory protein Nham_3525 from Nitrobacter hamburgensis (strain DSM 10229 / NCIMB 13809 / X14).